A 511-amino-acid chain; its full sequence is GMP synthase [glutamine-hydrolyzing] (511 aa).

The Glutamine amidotransferase type-1 domain occupies 5–195; the sequence is DILVLDFGSQ…AKYACNCESI (191 aa). The active-site Nucleophile is Cys-82. Catalysis depends on residues His-169 and Glu-171. In terms of domain architecture, GMPS ATP-PPase spans 196–386; the sequence is WNMGSFAKTQ…LGLSKEVVYR (191 aa). Residue 223 to 229 participates in ATP binding; that stretch reads SGGVDSS.

As to quaternary structure, homodimer.

It catalyses the reaction XMP + L-glutamine + ATP + H2O = GMP + L-glutamate + AMP + diphosphate + 2 H(+). It participates in purine metabolism; GMP biosynthesis; GMP from XMP (L-Gln route): step 1/1. In terms of biological role, catalyzes the synthesis of GMP from XMP. The polypeptide is GMP synthase [glutamine-hydrolyzing] (guaA) (Campylobacter jejuni subsp. jejuni serotype O:2 (strain ATCC 700819 / NCTC 11168)).